The sequence spans 67 residues: MERIILRKGKSIREAMEEQGVLEKFLKNRPKIDPAAKYHFNNDAVAYEPFTNYLDSFYFGEISIGTP.

A propeptide spans methionine 1 to aspartate 43 (activation peptide).

It belongs to the peptidase A1 family.

The protein resides in the secreted. The catalysed reaction is Degradation of gelatin, little activity on hemoglobin. Specificity on B chain of insulin more restricted than that of pepsin A. Does not cleave 1-Phe-|-Val-2, 4-Gln-|-His-5 or 23-Gly-|-Phe-24.. This is Pepsin B (PGB) from Sus scrofa (Pig).